Here is a 193-residue protein sequence, read N- to C-terminus: Ganglioside GM2 activator (193 aa).

Residues 1 to 20 (MHRLPLLLLLGLLLAGSVAP) form the signal peptide. Cystine bridges form between C39-C183, C99-C106, C112-C138, and C125-C136. The N-linked (GlcNAc...) asparagine glycan is linked to N151.

In terms of tissue distribution, widely expressed. Most abundant in kidney and testis.

Its subcellular location is the lysosome. The catalysed reaction is cholesterol(in) = cholesterol(out). Its function is as follows. Binds gangliosides and stimulates ganglioside GM2 degradation. It stimulates only the breakdown of ganglioside GM2 and glycolipid GA2 by beta-hexosaminidase A. It extracts single GM2 molecules from membranes and presents them in soluble form to beta-hexosaminidase A for cleavage of N-acetyl-D-galactosamine and conversion to GM3. The large binding pocket can accommodate several single chain phospholipids and fatty acids, GM2A also exhibits some calcium-independent phospholipase activity. Has cholesterol transfer activity. This Mus musculus (Mouse) protein is Ganglioside GM2 activator.